Reading from the N-terminus, the 303-residue chain is MADLSVNIGELQMKNPVMTASGTFGYGEEFSDFIDIARIGGIIVKGTTLHKREGNPYPRMAETPSGMLNAVGLQNKGVDYFVEQIYPRIKDIQTNMIVNVSGSAIEDYVKTAEIINELDKIPAIELNISCPNVKQGGMAFGVSAKGASEVVKAVRAAYKKTLIVKLSPNVTDITEIARAAEESGADSVSLINTLLGMAIDAERKRPILSTVTGGMSGAAVKPIALRMVWQVAKAVNIPVIGLGGIMNWKDAVEFMLAGASAIQIGTANFIDPAVTIKVEDGINNYLERHGCKSVKEIIGALEV.

FMN is bound by residues S21 and 45-46 (KG). Residues K45 and 69–73 (NAVGL) each bind substrate. The FMN site is built by N99 and N127. N127 contacts substrate. C130 functions as the Nucleophile in the catalytic mechanism. The FMN site is built by K165 and I191. A substrate-binding site is contributed by 192–193 (NT). Residues G217, 243-244 (GG), and 265-266 (GT) contribute to the FMN site.

Belongs to the dihydroorotate dehydrogenase family. Type 1 subfamily. Heterotetramer of 2 PyrK and 2 PyrD type B subunits. FMN is required as a cofactor.

The protein resides in the cytoplasm. It carries out the reaction (S)-dihydroorotate + NAD(+) = orotate + NADH + H(+). It functions in the pathway pyrimidine metabolism; UMP biosynthesis via de novo pathway; orotate from (S)-dihydroorotate (NAD(+) route): step 1/1. Its function is as follows. Catalyzes the conversion of dihydroorotate to orotate with NAD(+) as electron acceptor. The chain is Dihydroorotate dehydrogenase B (NAD(+)), catalytic subunit (pyrD) from Bacteroides thetaiotaomicron (strain ATCC 29148 / DSM 2079 / JCM 5827 / CCUG 10774 / NCTC 10582 / VPI-5482 / E50).